The sequence spans 450 residues: BAG family molecular chaperone regulator 5 (450 aa).

BAG domains follow at residues 9-86, 95-167, 182-260, 275-350, and 365-442; these read SIKR…EQNA, EAIF…ESCA, SVSK…DLDE, SILK…DLKE, and EHQS…YYLD.

In terms of assembly, binds to the ATPase domain of HSP/HSC70 chaperones.

In terms of biological role, co-chaperone for HSP/HSP70 proteins. It functions as a nucleotide-exchange factor promoting the release of ADP from HSP70, thereby activating HSP70-mediated protein refolding. The polypeptide is BAG family molecular chaperone regulator 5 (BAG5) (Gallus gallus (Chicken)).